The primary structure comprises 526 residues: Probable Xaa-Pro aminopeptidase MGG_05684 (526 aa).

Residues D285, D296, E447, and E488 each contribute to the Mn(2+) site.

Belongs to the peptidase M24B family. Mn(2+) serves as cofactor.

The enzyme catalyses Release of any N-terminal amino acid, including proline, that is linked to proline, even from a dipeptide or tripeptide.. Its function is as follows. Catalyzes the removal of a penultimate prolyl residue from the N-termini of peptides. The polypeptide is Probable Xaa-Pro aminopeptidase MGG_05684 (Pyricularia oryzae (strain 70-15 / ATCC MYA-4617 / FGSC 8958) (Rice blast fungus)).